A 383-amino-acid polypeptide reads, in one-letter code: Dimethylsulfoniopropionate lyase 6 (383 aa).

The protein belongs to the aspartate/glutamate racemases family. ALMA1 subfamily. As to quaternary structure, homotetramer.

It catalyses the reaction S,S-dimethyl-beta-propiothetin = acrylate + dimethyl sulfide + H(+). In terms of biological role, mediates cleavage of dimethylsulfoniopropionate (DMSP) into dimethyl sulfide (DMS) and acrylate. DMS is the principal form by which sulfur is transported from oceans to the atmosphere and is a key component of the ocean sulfur cycle. In Emiliania huxleyi (strain CCMP1516), this protein is Dimethylsulfoniopropionate lyase 6.